We begin with the raw amino-acid sequence, 814 residues long: MMILSILATVVLLGALFYHRVSLFISSLILLAWTAALGVAGLWSAWVLVPLAIILVPFNFAPMRKSMISAPVFRGFRKVMPPMSRTEKEAIDAGTTWWEGDLFQGKPDWKKLHNYPQPRLTAEEQAFLDGPVEEACRMANDFQITHELADLPPELWAYLKEHRFFAMIIKKEYGGLEFSAYAQSRVLQKLSGVSGILAITVGVPNSLGPGELLQHYGTDEQKDHYLPRLARGQEIPCFALTSPEAGSDAGAIPDTGIVCMGEWQGQQVLGMRLTWNKRYITLAPIATVLGLAFKLSDPEKLLGGAEDLGITCALIPTTTPGVEIGRRHFPLNVPFQNGPTRGKDVFVPIDYIIGGPKMAGQGWRMLVECLSVGRGITLPSNSTGGVKSVALATGAYAHIRRQFKISIGKMEGIEEPLARIAGNAYVMDAAASLITYGIMLGEKPAVLSAIVKYHCTHRGQQSIIDAMDITGGKGIMLGQSNFLARAYQGAPIAITVEGANILTRSMMIFGQGAIRCHPYVLEEMEAAKNNDVNAFDKLLFKHIGHVGSNKVRSFWLGLTRGLTSSTPTGDATKRYYQHLNRLSANLALLSDVSMAVLGGSLKRRERISARLGDILSQLYLASAVLKRYDDEGRNEADLPLVHWGVQDALYQAEQAMDDLLQNFPNRVVAGLLNVVIFPTGRHYLAPSDKLDHKVAKILQVPNATRSRIGRGQYLTPSEHNPVGLLEEALVDVIAADPIHQRICKELGKNLPFTRLDELAHNALVKGLIDKDEAAILVKAEESRLRSINVDDFDPEELATKPVKLPEKVRKVEAA.

Glu497 serves as the catalytic Proton acceptor.

This sequence belongs to the acyl-CoA dehydrogenase family. FAD is required as a cofactor.

The catalysed reaction is a medium-chain 2,3-saturated fatty acyl-CoA + oxidized [electron-transfer flavoprotein] + H(+) = a medium-chain (2E)-enoyl-CoA + reduced [electron-transfer flavoprotein]. The enzyme catalyses a long-chain 2,3-saturated fatty acyl-CoA + oxidized [electron-transfer flavoprotein] + H(+) = a long-chain (2E)-enoyl-CoA + reduced [electron-transfer flavoprotein]. The protein operates within lipid metabolism; fatty acid beta-oxidation. In terms of biological role, catalyzes the dehydrogenation of acyl-coenzymes A (acyl-CoAs) to 2-enoyl-CoAs, the first step of the beta-oxidation cycle of fatty acid degradation. Is required for E.coli to utilize dodecanoate or oleate as the sole carbon and energy source for growth. In Escherichia coli (strain K12), this protein is Acyl-coenzyme A dehydrogenase.